A 165-amino-acid polypeptide reads, in one-letter code: Transcriptional repressor NrdR (165 aa).

A zinc finger spans residues 3-34; the sequence is CPFCSANDTKVIDSRLVSDGHQVRRRRECLAC. Positions 49-139 constitute an ATP-cone domain; it reads PRIIKRDGSR…VYLSFEDISE (91 aa).

Belongs to the NrdR family. Zn(2+) is required as a cofactor.

Its function is as follows. Negatively regulates transcription of bacterial ribonucleotide reductase nrd genes and operons by binding to NrdR-boxes. The polypeptide is Transcriptional repressor NrdR (Colwellia psychrerythraea (strain 34H / ATCC BAA-681) (Vibrio psychroerythus)).